The primary structure comprises 91 residues: Early E3B 10.4 kDa protein (91 aa).

An N-terminal signal peptide occupies residues 1 to 22; it reads MIPRNFFFTILICPFNVCATFT. At 23-34 the chain is on the lumenal side; the sequence is AVATASPDCIGP. The helical transmembrane segment at 35-60 threads the bilayer; sequence FASYALFAFVTCICVCSIVCLVINFF. At 61-91 the chain is on the cytoplasmic side; the sequence is QLVDWIFVRIAYLRHHPEYRNQNVAALLRLI.

This sequence belongs to the adenoviridae E3B family.

It localises to the host endoplasmic reticulum membrane. In terms of biological role, down-regulates the EGF receptor. The chain is Early E3B 10.4 kDa protein from Human adenovirus B serotype 3 (HAdV-3).